Here is a 151-residue protein sequence, read N- to C-terminus: Superoxide dismutase [Cu-Zn] (151 aa).

Cys6 carries the S-palmitoyl cysteine lipid modification. Positions 45, 47, and 62 each coordinate Cu cation. Cys56 and Cys144 are joined by a disulfide. His62, His70, His79, and Asp82 together coordinate Zn(2+). His118 is a binding site for Cu cation.

It belongs to the Cu-Zn superoxide dismutase family. In terms of assembly, homodimer. Cu cation is required as a cofactor. It depends on Zn(2+) as a cofactor.

The protein resides in the cytoplasm. Its subcellular location is the nucleus. It catalyses the reaction 2 superoxide + 2 H(+) = H2O2 + O2. In terms of biological role, destroys radicals which are normally produced within the cells and which are toxic to biological systems. The chain is Superoxide dismutase [Cu-Zn] (sod1) from Xenopus tropicalis (Western clawed frog).